An 874-amino-acid polypeptide reads, in one-letter code: Translation initiation factor IF-2 (874 aa).

Positions 1–262 are disordered; sequence MEDKNKTIKE…EKSTSDRDFS (262 aa). Residues 54–63 are compositionally biased toward pro residues; that stretch reads SKPPVMPLPL. Positions 83 to 104 are enriched in basic and acidic residues; sequence AKREESPGKQDAGRPPRDKDTR. The segment covering 141–222 has biased composition (gly residues); that stretch reads SGGGYQGNRG…NRGPRSGGTG (82 aa). The segment covering 235–244 has biased composition (polar residues); it reads LSQSRGSSVT. Basic and acidic residues predominate over residues 250–262; it reads HDKEKSTSDRDFS. Residues 369–538 form the tr-type G domain; sequence NRPPVVTIMG…LLQAEVMDLK (170 aa). Residues 378–385 form a G1 region; it reads GHVDHGKT. A GTP-binding site is contributed by 378–385; it reads GHVDHGKT. The segment at 403-407 is G2; it reads GITQH. The segment at 424-427 is G3; that stretch reads DTPG. GTP is bound by residues 424–428 and 478–481; these read DTPGH and NKID. The tract at residues 478 to 481 is G4; sequence NKID. The G5 stretch occupies residues 514–516; sequence SAR.

The protein belongs to the TRAFAC class translation factor GTPase superfamily. Classic translation factor GTPase family. IF-2 subfamily.

It is found in the cytoplasm. In terms of biological role, one of the essential components for the initiation of protein synthesis. Protects formylmethionyl-tRNA from spontaneous hydrolysis and promotes its binding to the 30S ribosomal subunits. Also involved in the hydrolysis of GTP during the formation of the 70S ribosomal complex. This Leptospira interrogans serogroup Icterohaemorrhagiae serovar copenhageni (strain Fiocruz L1-130) protein is Translation initiation factor IF-2.